The primary structure comprises 554 residues: (E)-beta-caryophyllene synthase (554 aa).

Residues Asp-313 and Asp-317 each coordinate Mn(2+). The DDXXD motif signature appears at 313-317 (DDTYD). Homodimerization stretches follow at residues 319 to 325 (YGTLDEL) and 391 to 427 (EAQW…LAVI). 2 residues coordinate Mn(2+): Asp-457 and Glu-465.

This sequence belongs to the terpene synthase family. Homodimer. It depends on Mn(2+) as a cofactor. Mg(2+) is required as a cofactor. As to expression, expressed in peltate glandular trichomes. Present at low levels in flowers, leaves and stems.

The catalysed reaction is (2E,6E)-farnesyl diphosphate = (-)-(E)-beta-caryophyllene + diphosphate. It catalyses the reaction (2E,6E)-farnesyl diphosphate = alpha-humulene + diphosphate. It participates in secondary metabolite biosynthesis; terpenoid biosynthesis. Its function is as follows. Involved in the biosynthesis of phenolic sesquiterpenes natural products. Sesquiterpene synthase converting (2E,6E)-farnesyl diphosphate (FPP) to (E)-beta-caryophyllene and alpha-humulene. This Origanum vulgare (Wild marjoram) protein is (E)-beta-caryophyllene synthase.